The chain runs to 351 residues: Transcription factor bHLH93 (351 aa).

The bHLH domain maps to 174 to 223; sequence GQPSKNLMAERRRRKRLNDRLSMLRSIVPKISKMDRTSILGDAIDYMKEL.

As to quaternary structure, homodimer. Interacts with FAMA. Broadly expressed.

The protein localises to the nucleus. Functionally, transcription factor. May be involved in the differentiation of stomatal guard cells. This chain is Transcription factor bHLH93 (BHLH93), found in Arabidopsis thaliana (Mouse-ear cress).